Here is a 455-residue protein sequence, read N- to C-terminus: SUN domain-containing protein 2 (455 aa).

Residues 1–12 (MSASTVSITASP) are compositionally biased toward polar residues. Residues 1–99 (MSASTVSITA…RTRKSQGNKI (99 aa)) are disordered. Ser2 bears the N-acetylserine mark. Over 2–105 (SASTVSITAS…GNKIDRGKWK (104 aa)) the chain is Nuclear. The residue at position 63 (Ser63) is a Phosphoserine. A compositionally biased stretch (low complexity) spans 74 to 88 (KSGSTATGTNTTTTQ). The Nuclear localization signal motif lies at 88-95 (QRRTRKSQ). Residues 106–128 (TVVRVFAKQFGALLLLVGLIQLI) form a helical membrane-spanning segment. Over 129-455 (RKLTLKDSSL…ELDSVSVAHA (327 aa)) the chain is Perinuclear space. Residues 201–225 (LHSELKKVESKTERLQVSVDELNAK) adopt a coiled-coil conformation. The region spanning 285–447 (GGAFVMGHSD…YRFRVHGREL (163 aa)) is the SUN domain.

Forms homomers (e.g. dimers, trimers and tetramers) and heteromers with SUN1. Interacts with SUN3, SUN4 and TIK. Core component of the LINC complex which is composed of inner nuclear membrane SUN domain-containing proteins coupled to outer nuclear membrane WIP and WIT proteins. The LINC complex also involves nucleoskeletal proteins CRWN/LINC and possibly KAKU4 and the cytoskeletal myosin KAKU1. Interacts with LINC1, WIP1, WIP2 and WIP3 at the nuclear envelope (NE). Interacts with SINE1, SINE2, SINE3 and SINE4. Interacts with NEAP1, NEA2 and NEAP3. In terms of tissue distribution, expressed in roots, hypocotyls, cotyledons and leaves and inflorescences.

It is found in the nucleus inner membrane. The protein localises to the cytoplasm. It localises to the cytoskeleton. The protein resides in the phragmoplast. Its subcellular location is the endoplasmic reticulum membrane. It is found in the nucleus envelope. Its function is as follows. Component of SUN-protein-containing multivariate complexes also called LINC complexes which link the nucleoskeleton and cytoskeleton by providing versatile outer nuclear membrane attachment sites for cytoskeletal filaments. Required for the maintenance and/or formation of polarized nuclear shape in root hairs. Modulates the anchoring and mobility of WIP proteins in the nuclear envelope (NE). In association with SUN1, may be involved in telomere attachment to nuclear envelope in the prophase of meiosis. As component of the SUN-WIP-WIT2-KAKU1 complex, mediates the transfer of cytoplasmic forces to the nuclear envelope (NE), leading to nuclear shape changes. This Arabidopsis thaliana (Mouse-ear cress) protein is SUN domain-containing protein 2.